We begin with the raw amino-acid sequence, 583 residues long: CTP synthase (583 aa).

Residues Met-1–Leu-278 form an amidoligase domain region. Residue Ser-20 coordinates CTP. Ser-20 provides a ligand contact to UTP. ATP-binding positions include Ser-21–Leu-26 and Asp-78. Mg(2+) contacts are provided by Asp-78 and Glu-152. CTP-binding positions include Asp-159–Glu-161, Lys-199–Gln-204, and Lys-235. UTP contacts are provided by residues Lys-199 to Gln-204 and Lys-235. Positions Arg-303 to Gly-551 constitute a Glutamine amidotransferase type-1 domain. Gly-366 is an L-glutamine binding site. Cys-393 acts as the Nucleophile; for glutamine hydrolysis in catalysis. Residues Leu-394–Gln-397, Glu-416, and Arg-477 contribute to the L-glutamine site. Catalysis depends on residues His-524 and Glu-526. Residues Pro-559 to Gly-583 are disordered.

Belongs to the CTP synthase family. Homotetramer.

It carries out the reaction UTP + L-glutamine + ATP + H2O = CTP + L-glutamate + ADP + phosphate + 2 H(+). It catalyses the reaction L-glutamine + H2O = L-glutamate + NH4(+). The catalysed reaction is UTP + NH4(+) + ATP = CTP + ADP + phosphate + 2 H(+). It participates in pyrimidine metabolism; CTP biosynthesis via de novo pathway; CTP from UDP: step 2/2. Its activity is regulated as follows. Allosterically activated by GTP, when glutamine is the substrate; GTP has no effect on the reaction when ammonia is the substrate. The allosteric effector GTP functions by stabilizing the protein conformation that binds the tetrahedral intermediate(s) formed during glutamine hydrolysis. Inhibited by the product CTP, via allosteric rather than competitive inhibition. Functionally, catalyzes the ATP-dependent amination of UTP to CTP with either L-glutamine or ammonia as the source of nitrogen. Regulates intracellular CTP levels through interactions with the four ribonucleotide triphosphates. The sequence is that of CTP synthase from Mycobacterium ulcerans (strain Agy99).